A 276-amino-acid chain; its full sequence is Alpha-aminoadipate--LysW ligase LysX (276 aa).

ATP contacts are provided by residues Lys-82, Lys-122, 126-132, 162-173, Arg-187, and Asn-196; these read GSWGRMV and QEFVKKPNRDIR. The 186-residue stretch at 86–271 folds into the ATP-grasp domain; sequence LSLLAKHNIK…VSSYLLNKLR (186 aa). Mg(2+)-binding residues include Asp-231, Glu-244, and Asn-246. The N-[TS] motif that is essential for LysX substrate specificity signature appears at 253–254; sequence NT.

Belongs to the RimK family. LysX subfamily. In terms of assembly, homodimer. The cofactor is Mg(2+).

It carries out the reaction [amino-group carrier protein]-C-terminal-L-glutamate + L-2-aminoadipate + ATP = [amino-group carrier protein]-C-terminal-N-(1,4-dicarboxybutan-1-yl)-L-glutamine + ADP + phosphate + H(+). The protein operates within amino-acid biosynthesis; L-lysine biosynthesis via AAA pathway; L-lysine from L-alpha-aminoadipate (Thermus route): step 1/5. Catalyzes the ATP-dependent formation of a covalent bond between the amino group of alpha-aminoadipate (AAA) and the gamma-carboxyl group of the C-terminal glutamate residue in LysW. This Sulfolobus acidocaldarius (strain ATCC 33909 / DSM 639 / JCM 8929 / NBRC 15157 / NCIMB 11770) protein is Alpha-aminoadipate--LysW ligase LysX (lysX).